The following is a 612-amino-acid chain: Peroxisomal targeting signal receptor (612 aa).

Met1 is subject to N-acetylmethionine. The tract at residues 1 to 24 (MDVGSCSVGNNPLAQLHKHTQQNK) is disordered. Cys6 participates in a covalent cross-link: Glycyl cysteine thioester (Cys-Gly) (interchain with G-Cter in ubiquitin). The segment at 7–29 (SVGNNPLAQLHKHTQQNKSLQFN) is amphipathic helix 1 (AH1). Residues Lys18 and Lys24 each participate in a glycyl lysine isopeptide (Lys-Gly) (interchain with G-Cter in ubiquitin) cross-link. Ser61 carries the phosphoserine modification. The TPR 1 repeat unit spans residues 64–97 (NMANMQRFINGEPLIDDKRRMEIGPSSGRLPPFS). Residues 70-104 (RFINGEPLIDDKRRMEIGPSSGRLPPFSNVHSLQT) are amphipathic helix 2 (AH2). The WxxxF/Y motif 1 motif lies at 120 to 124 (WSQEF). A disordered region spans residues 129–151 (SIQNRNADTGNSEKAWQRGSTTA). An amphipathic helix 3 (AH3) region spans residues 158 to 174 (PNTMMNNYAYASMNSLS). Residues 182–202 (AFMNQQQSGRSKEGVNEQEQQ) form a disordered region. Positions 204-208 (WTDQF) match the WxxxF/Y motif 2 motif. The amphipathic helix 4 (AH4) stretch occupies residues 257 to 273 (FQEVWDSIHKDAEEVLP). TPR repeat units follow at residues 313–346 (PNAY…KPDH), 347–380 (VDAW…DPKN), 381–418 (LEAM…IWSR), 419–456 (IKQQ…STID), 457–490 (PEIQ…NPND), 491–524 (ELMW…KPSF), and 525–558 (VRAR…HEVN).

This sequence belongs to the peroxisomal targeting signal receptor family. As to quaternary structure, interacts (via WxxxF/Y and LVxEF motifs) with PEX14; promoting translocation through the PEX13-PEX14 docking complex. In terms of processing, monoubiquitinated at Cys-6 by PEX2 during PEX5 passage through the retrotranslocation channel: monoubiquitination acts as a signal for PEX5 extraction and is required for proper export from peroxisomes and recycling. Ubiquitination at Cys-6 is UBC4-independent but requires the presence of PEX4. When PEX5 recycling is compromised, polyubiquitinated at Lys-18 and Lys-24 by PEX10 during its passage through the retrotranslocation channel, leading to its degradation. Ubiquitination at Lys-18 and Lys-24 are UBC4-dependent. Monoubiquitination at Cys-6 and polyubiquitination at Lys-18 and Lys-24 are removed by UBP15 in the cytosol, resetting PEX5 for a subsequent import cycle.

It is found in the cytoplasm. The protein resides in the cytosol. The protein localises to the peroxisome matrix. Receptor that mediates peroxisomal import of proteins containing a C-terminal PTS1-type tripeptide peroxisomal targeting signal (SKL-type). Binds to cargo proteins containing a PTS1 peroxisomal targeting signal in the cytosol, and translocates them into the peroxisome matrix by passing through the PEX13-PEX14 docking complex along with cargo proteins. PEX5 receptor is then retrotranslocated into the cytosol, leading to release of bound cargo in the peroxisome matrix, and reset for a subsequent peroxisome import cycle. The polypeptide is Peroxisomal targeting signal receptor (Saccharomyces cerevisiae (strain ATCC 204508 / S288c) (Baker's yeast)).